Consider the following 197-residue polypeptide: Holliday junction branch migration complex subunit RuvA (197 aa).

A domain I region spans residues 1–62 (MIEFVRGEVA…EDQEVLFGFR (62 aa)). Positions 63–141 (SRRERALFTK…ELAPDYIPSE (79 aa)) are domain II. Residues 141–145 (EGLFA) are flexible linker. The interval 146 to 197 (QGNAELNEACEALTALGYSEREVEKVKKALQGEVLSTDQYVKRALQLLLNVR) is domain III.

It belongs to the RuvA family. Homotetramer. Forms an RuvA(8)-RuvB(12)-Holliday junction (HJ) complex. HJ DNA is sandwiched between 2 RuvA tetramers; dsDNA enters through RuvA and exits via RuvB. An RuvB hexamer assembles on each DNA strand where it exits the tetramer. Each RuvB hexamer is contacted by two RuvA subunits (via domain III) on 2 adjacent RuvB subunits; this complex drives branch migration. In the full resolvosome a probable DNA-RuvA(4)-RuvB(12)-RuvC(2) complex forms which resolves the HJ.

Its subcellular location is the cytoplasm. In terms of biological role, the RuvA-RuvB-RuvC complex processes Holliday junction (HJ) DNA during genetic recombination and DNA repair, while the RuvA-RuvB complex plays an important role in the rescue of blocked DNA replication forks via replication fork reversal (RFR). RuvA specifically binds to HJ cruciform DNA, conferring on it an open structure. The RuvB hexamer acts as an ATP-dependent pump, pulling dsDNA into and through the RuvAB complex. HJ branch migration allows RuvC to scan DNA until it finds its consensus sequence, where it cleaves and resolves the cruciform DNA. The chain is Holliday junction branch migration complex subunit RuvA from Exiguobacterium sibiricum (strain DSM 17290 / CCUG 55495 / CIP 109462 / JCM 13490 / 255-15).